The chain runs to 252 residues: 3-dehydroquinate dehydratase (252 aa).

3-dehydroquinate contacts are provided by residues 46–48 (EWR) and Arg-82. The active-site Proton donor/acceptor is His-143. Residue Lys-170 is the Schiff-base intermediate with substrate of the active site. 3-dehydroquinate is bound by residues Arg-212, Ser-231, and Gln-235.

This sequence belongs to the type-I 3-dehydroquinase family. As to quaternary structure, homodimer.

It catalyses the reaction 3-dehydroquinate = 3-dehydroshikimate + H2O. The protein operates within metabolic intermediate biosynthesis; chorismate biosynthesis; chorismate from D-erythrose 4-phosphate and phosphoenolpyruvate: step 3/7. In terms of biological role, involved in the third step of the chorismate pathway, which leads to the biosynthesis of aromatic amino acids. Catalyzes the cis-dehydration of 3-dehydroquinate (DHQ) and introduces the first double bond of the aromatic ring to yield 3-dehydroshikimate. This chain is 3-dehydroquinate dehydratase, found in Listeria monocytogenes serotype 4b (strain F2365).